A 187-amino-acid polypeptide reads, in one-letter code: UPF0301 protein PMI0339 (187 aa).

This sequence belongs to the UPF0301 (AlgH) family.

In Proteus mirabilis (strain HI4320), this protein is UPF0301 protein PMI0339.